The chain runs to 20 residues: Sperm acrosome membrane-associated protein 3, processed form (20 aa).

Belongs to the glycosyl hydrolase 22 family.

Its function is as follows. Sperm surface membrane protein that may be involved in sperm-egg plasma membrane adhesion and fusion during fertilization. It could be a potential receptor for the egg oligosaccharide residue N-acetylglucosamine, which is present in the extracellular matrix over the egg plasma membrane. This is Sperm acrosome membrane-associated protein 3, processed form (SPACA3) from Vulpes vulpes (Red fox).